The sequence spans 443 residues: Trigger factor (443 aa).

One can recognise a PPIase FKBP-type domain in the interval 161-246 (ADGVTITYHG…VISVTAPRLP (86 aa)).

This sequence belongs to the FKBP-type PPIase family. Tig subfamily.

Its subcellular location is the cytoplasm. It carries out the reaction [protein]-peptidylproline (omega=180) = [protein]-peptidylproline (omega=0). In terms of biological role, involved in protein export. Acts as a chaperone by maintaining the newly synthesized protein in an open conformation. Functions as a peptidyl-prolyl cis-trans isomerase. The protein is Trigger factor of Nitrosococcus oceani (strain ATCC 19707 / BCRC 17464 / JCM 30415 / NCIMB 11848 / C-107).